A 272-amino-acid polypeptide reads, in one-letter code: 3-methyl-2-oxobutanoate hydroxymethyltransferase (272 aa).

The Mg(2+) site is built by D43 and D82. 3-methyl-2-oxobutanoate contacts are provided by residues 43-44, D82, and K112; that span reads DS. Residue E114 coordinates Mg(2+). The Proton acceptor role is filled by E179.

It belongs to the PanB family. In terms of assembly, homodecamer; pentamer of dimers. Requires Mg(2+) as cofactor.

It is found in the cytoplasm. It carries out the reaction 3-methyl-2-oxobutanoate + (6R)-5,10-methylene-5,6,7,8-tetrahydrofolate + H2O = 2-dehydropantoate + (6S)-5,6,7,8-tetrahydrofolate. Its pathway is cofactor biosynthesis; (R)-pantothenate biosynthesis; (R)-pantoate from 3-methyl-2-oxobutanoate: step 1/2. Catalyzes the reversible reaction in which hydroxymethyl group from 5,10-methylenetetrahydrofolate is transferred onto alpha-ketoisovalerate to form ketopantoate. This is 3-methyl-2-oxobutanoate hydroxymethyltransferase from Staphylococcus aureus (strain Newman).